The primary structure comprises 129 residues: Glycine cleavage system H protein (129 aa).

The Lipoyl-binding domain occupies 24 to 106 (SVVVGVTQHA…YGAGWIVEIE (83 aa)). K65 is modified (N6-lipoyllysine).

This sequence belongs to the GcvH family. The glycine cleavage system is composed of four proteins: P, T, L and H. (R)-lipoate serves as cofactor.

Its function is as follows. The glycine cleavage system catalyzes the degradation of glycine. The H protein shuttles the methylamine group of glycine from the P protein to the T protein. This is Glycine cleavage system H protein from Myxococcus xanthus (strain DK1622).